The primary structure comprises 183 residues: Akirin-1B (183 aa).

The interval 14 to 43 (EALMSPQSPKRRRCAPLPGSPATPSPQRCG) is disordered. The SYVS motif motif lies at 180–183 (SYVS).

The protein belongs to the akirin family.

It is found in the nucleus. In terms of biological role, molecular adapter that acts as a bridge between proteins, and which is involved skeletal muscle development. Functions as a signal transducer for MSTN during skeletal muscle regeneration and myogenesis. In Xenopus laevis (African clawed frog), this protein is Akirin-1B (akirin1-b).